The following is a 274-amino-acid chain: MQHDGYWVFSQIDPVAFSLGPLSVRWYGLMYLFGFAFAMWLAGRRADAPNSGWTRNEVSDLLFYGFLGVILGGRVGYVLFYNFDMFLADPLYLFKIWTGGMSFHGGLIGVITAMVWFAHKTNRHFFTVADFVAPLIPFGLGVGRIGNFLNGELWGRVTDVPWAIIFPEAGPEPRHPSQLYQFALEGVVLFIILNLFWRKNPPRGAISGMFLLFYGLFRFLVEFVRQPDSQLGLYFQEISMGQILSTPMIIIGALMIWVAYKRPQLFGNSVKEAK.

7 helical membrane-spanning segments follow: residues 22-42, 61-81, 96-116, 125-145, 177-197, 204-224, and 238-258; these read LSVR…MWLA, LLFY…VLFY, IWTG…AMVW, FFTV…VGRI, SQLY…NLFW, GAIS…VEFV, and ISMG…MIWV. Arginine 144 contacts a 1,2-diacyl-sn-glycero-3-phospho-(1'-sn-glycerol).

Belongs to the Lgt family.

The protein localises to the cell inner membrane. It catalyses the reaction L-cysteinyl-[prolipoprotein] + a 1,2-diacyl-sn-glycero-3-phospho-(1'-sn-glycerol) = an S-1,2-diacyl-sn-glyceryl-L-cysteinyl-[prolipoprotein] + sn-glycerol 1-phosphate + H(+). The protein operates within protein modification; lipoprotein biosynthesis (diacylglyceryl transfer). Catalyzes the transfer of the diacylglyceryl group from phosphatidylglycerol to the sulfhydryl group of the N-terminal cysteine of a prolipoprotein, the first step in the formation of mature lipoproteins. The protein is Phosphatidylglycerol--prolipoprotein diacylglyceryl transferase of Aeromonas hydrophila subsp. hydrophila (strain ATCC 7966 / DSM 30187 / BCRC 13018 / CCUG 14551 / JCM 1027 / KCTC 2358 / NCIMB 9240 / NCTC 8049).